Reading from the N-terminus, the 641-residue chain is Toxin TseL (641 aa).

Interacts with VgrG3; this interaction allows TseL secretion to target cells.

It is found in the secreted. In terms of biological role, toxin secreted by the type VI (T6SS) secretion system that acts on prokaryotic as well as eukaryotic target cells. This is Toxin TseL from Vibrio cholerae serotype O1 (strain ATCC 39315 / El Tor Inaba N16961).